A 359-amino-acid polypeptide reads, in one-letter code: 4-galactosyl-N-acetylglucosaminide 3-alpha-L-fucosyltransferase FUT6 (359 aa).

At 1–14 (MDPLGPAKTQWSWR) the chain is on the cytoplasmic side. Residues 15 to 34 (CCLTALLFQLLVAVCFFSYL) form a helical; Signal-anchor for type II membrane protein membrane-spanning segment. Residues 35-359 (RVSRDDPTVY…QTRSIAAWFT (325 aa)) are Lumenal-facing. The tract at residues 73–112 (KPIALPRCSEMVPGTADCNITADRKVYPQADAVIVHHREV) is determines site-specific fucosylation. Residues Asn-91, Asn-153, and Asn-184 are each glycosylated (N-linked (GlcNAc...) asparagine).

It belongs to the glycosyltransferase 10 family. In terms of assembly, homodimer and monomer. Monomer (secreted form). In terms of processing, N-glycosylated. Post-translationally, proteolytic cleavage releases a secreted glycoform of 43 kDa.

It localises to the golgi apparatus. Its subcellular location is the golgi stack membrane. The protein resides in the secreted. The enzyme catalyses a beta-D-galactosyl-(1-&gt;4)-N-acetyl-beta-D-glucosaminyl derivative + GDP-beta-L-fucose = a beta-D-galactosyl-(1-&gt;4)-[alpha-L-fucosyl-(1-&gt;3)]-N-acetyl-beta-D-glucosaminyl derivative + GDP + H(+). It carries out the reaction an N-acetyl-alpha-neuraminyl-(2-&gt;3)-beta-D-galactosyl-(1-&gt;4)-N-acetyl-beta-D-glucosaminyl derivative + GDP-beta-L-fucose = an alpha-Neu5Ac-(2-&gt;3)-beta-D-Gal-(1-&gt;4)-[alpha-L-Fuc-(1-&gt;3)]-beta-D-GlcNAc derivative + GDP + H(+). The catalysed reaction is an alpha-Neu5Ac-(2-&gt;3)-beta-D-Gal-(1-&gt;4)-beta-D-GlcNAc-(1-&gt;3)-beta-D-Gal-(1-&gt;4)-[alpha-L-Fuc-(1-&gt;3)]-beta-D-GlcNAc derivative + GDP-beta-L-fucose = an alpha-Neu5Ac-(2-&gt;3)-beta-D-Gal-(1-&gt;4)-[alpha-L-Fuc-(1-&gt;3)]-beta-D-GlcNAc-(1-&gt;3)-beta-D-Gal-(1-&gt;4)-[alpha-L-Fuc-(1-&gt;3)]-beta-D-GlcNAc derivative + GDP + H(+). It catalyses the reaction a neolactoside nLc6Cer + GDP-beta-L-fucose = beta-D-Gal-(1-&gt;4)-[alpha-L-Fuc-(1-&gt;3)]-beta-D-GlcNAc-(1-&gt;3)-beta-D-Gal-(1-&gt;4)-beta-D-GlcNAc-(1-&gt;3)-beta-D-Gal-(1-&gt;4)-beta-D-Glc-(1&lt;-&gt;1')-Cer + GDP + H(+). The enzyme catalyses a neolactoside nLc6Cer + GDP-beta-L-fucose = beta-D-galactosyl-(1-&gt;4)-N-acetyl-beta-D-glucosaminyl-(1-&gt;3)-beta-D-galactosyl-(1-&gt;4)-[alpha-L-fucosyl-(1-&gt;3)]-N-acetyl-beta-D-glucosaminyl-(1-&gt;3)-beta-D-galactosyl-(1-&gt;4)-beta-D-glucosyl-(1&lt;-&gt;1')-ceramide + GDP + H(+). It carries out the reaction a neolactoside VI(3)-alpha-NeuNAc-nLc6Cer + GDP-beta-L-fucose = a neolactoside VI(3)-alpha-NeuAc,V(3)-alphaFuc-nLc6Cer + GDP + H(+). The catalysed reaction is beta-D-galactosyl-(1-&gt;4)-N-acetyl-D-glucosamine + GDP-beta-L-fucose = beta-D-galactosyl-(1-&gt;4)-[alpha-L-fucosyl-(1-&gt;3)]-N-acetyl-D-glucosamine + GDP + H(+). It catalyses the reaction N-acetyl-alpha-neuraminosyl-(2-&gt;3)-beta-D-galactosyl-(1-&gt;4)-N-acetyl-beta-D-glucosamine + GDP-beta-L-fucose = N-acetyl-alpha-neuraminosyl-(2-&gt;3)-beta-D-galactosyl-(1-&gt;4)-[alpha-L-fucosyl-(1-&gt;3)]-N-acetyl-beta-D-glucosamine + GDP + H(+). The enzyme catalyses lactose + GDP-beta-L-fucose = beta-D-galactosyl-(1-&gt;4)-[alpha-L-fucosyl-(1-&gt;3)]-D-glucose + GDP + H(+). It carries out the reaction alpha-L-Fuc-(1-&gt;2)-beta-D-Gal-(1-&gt;4)-D-Glc + GDP-beta-L-fucose = alpha-L-Fuc-(1-&gt;2)-beta-D-Gal-(1-&gt;4)-[alpha-L-Fuc-(1-&gt;3)]-D-Glc + GDP + H(+). The catalysed reaction is a beta-D-galactosyl-(1-&gt;4)-N-acetyl-beta-D-6-sulfooxy-glucosaminyl derivative + GDP-beta-L-fucose = a beta-D-galactosyl-(1-&gt;4)-[alpha-L-fucosyl-(1-&gt;3)]-N-acetyl-beta-D-6-sulfooxy-glucosaminyl derivative + GDP + H(+). The protein operates within protein modification; protein glycosylation. Functionally, catalyzes the transfer of L-fucose, from a guanosine diphosphate-beta-L-fucose, to the N-acetyl glucosamine (GlcNAc) of a distal alpha2,3 sialylated lactosamine unit of a glycoprotein- or glycolipid-linked sialopolylactosamines chain or of a distal or internal lactosamine unit of a neutral glycoprotein- or glycolipid-linked polylactosamines chain through an alpha-1,3 glycosidic linkage and participates in surface expression of the sialyl Lewis X (sLe(x)), Lewis X (Le(x)) and non sialylated VIM2 determinants. Moreover transfers fucose to H-type 2 (Fucalpha1-2Galbeta1-4GlcNAc) chain acceptor substrates and participates in difucosylated sialyl Lewis x determinants. Also fucosylates a polylactosamine substrate having a 6 sulfate modification at the GlcNAc moiety and gives rise to sialyl and non-sialyl 6-sulfo lewis X. Does not have activity towards type 1 ((Galbeta1-3GlcNAc)) and H-type 1 chain (Fucalpha1-2Galbeta1-3GlcNAc) acceptors substrates. The sequence is that of 4-galactosyl-N-acetylglucosaminide 3-alpha-L-fucosyltransferase FUT6 from Pongo pygmaeus (Bornean orangutan).